A 943-amino-acid polypeptide reads, in one-letter code: Synaptotagmin-like protein 2 (943 aa).

A RabBD domain is found at 1–57 (MIDLSFLTEEEQEAIMKVLQRDAALKRAEEERVRHLPEKVKDDQQLKNMSGQWFYEA). Disordered regions lie at residues 77 to 99 (RKKR…KESW), 118 to 291 (EEPE…VRFH), and 361 to 613 (ESDR…SNSG). A compositionally biased stretch (basic and acidic residues) spans 82–99 (QVADEQSKDRANRAKESW). The segment covering 125–138 (APASPSSSVVNPVS) has biased composition (low complexity). Positions 174 to 192 (SQQTKNEQSKNGKTGLFQT) are enriched in polar residues. A compositionally biased stretch (basic and acidic residues) spans 194 to 205 (KEGELSESKEES). Polar residues-rich tracts occupy residues 382 to 394 (PQPS…LPFQ), 404 to 416 (KNET…SGSF), and 426 to 440 (EFLT…NSHT). Residues 524 to 537 (ELVRSAEDDQKADQ) are compositionally biased toward basic and acidic residues. The span at 549 to 560 (STVSSQPDNQFS) shows a compositional bias: polar residues. The segment covering 603–613 (SSLTNLSSNSG) has biased composition (low complexity). C2 domains follow at residues 637–762 (VKGS…LKWY) and 777–906 (NRGE…VDWM).

Monomer. Binds NRXN1. Binds RAB27A that has been activated by GTP-binding via its N-terminus. Interacts with RAB27B.

It is found in the cell membrane. May act as a RAB27A effector protein and play a role in cytotoxic granule exocytosis in lymphocytes. This chain is Synaptotagmin-like protein 2 (SYTL2), found in Bos taurus (Bovine).